Here is a 206-residue protein sequence, read N- to C-terminus: Transmembrane emp24 domain-containing protein bai (206 aa).

The first 20 residues, 1–20 (MLKSLLCILLIFGCLCRIHG), serve as a signal peptide directing secretion. Residues 21–172 (VMFHLTPNTQ…RDTNEKTNSR (152 aa)) lie on the Lumenal side of the membrane. Residues 30 to 140 (QKCLKEDIQA…LKPLEVDLKR (111 aa)) form the GOLD domain. A helical membrane pass occupies residues 173–193 (VLFFSIFSMCCLLGLATWQVL). The Cytoplasmic portion of the chain corresponds to 194-206 (YLRRYFKAKKLIE).

Belongs to the EMP24/GP25L family.

It localises to the membrane. Functionally, eca and bai are essential, though not redundant, for dorsoventral patterning of the embryo. Specifically required during early embryogenesis for the activity of maternal tkv, while the zygotic tkv is not affected. The chain is Transmembrane emp24 domain-containing protein bai from Drosophila grimshawi (Hawaiian fruit fly).